The primary structure comprises 852 residues: Protein SEY1 (852 aa).

Topologically, residues 1-738 (MNGHFAAVGN…KRSAIGGITQ (738 aa)) are cytoplasmic. Residues 47-283 (GFNYHLISVF…FVGGVFLPEY (237 aa)) enclose the GB1/RHD3-type G domain. 57-64 (GSQSTGKS) provides a ligand contact to GTP. The stretch at 475–500 (QYRLFEKELDEVSARLRKEEMRRLAI) forms a coiled coil. A helical membrane pass occupies residues 739-759 (VPLYFYIVLLIFGWNEIVMVL). Topologically, residues 760 to 762 (RNP) are lumenal. Residues 763 to 783 (MLFMLLLVMGGGTYVAYTLNL) traverse the membrane as a helical segment. The Cytoplasmic portion of the chain corresponds to 784 to 852 (LGPMMQMANA…AQEVEEDDDI (69 aa)). The segment at 825 to 852 (RSQDNGIGMDRLDSRGKKAQEVEEDDDI) is disordered. Residues 834-845 (DRLDSRGKKAQE) show a composition bias toward basic and acidic residues.

This sequence belongs to the TRAFAC class dynamin-like GTPase superfamily. GB1/RHD3 GTPase family. RHD3 subfamily.

It is found in the endoplasmic reticulum membrane. Its function is as follows. Cooperates with the reticulon proteins and tubule-shaping DP1 family proteins to generate and maintain the structure of the tubular endoplasmic reticulum network. Has GTPase activity, which is required for its function in ER organization. The protein is Protein SEY1 of Chaetomium globosum (strain ATCC 6205 / CBS 148.51 / DSM 1962 / NBRC 6347 / NRRL 1970) (Soil fungus).